The following is a 326-amino-acid chain: ATP synthase gamma chain (326 aa).

This sequence belongs to the ATPase gamma chain family. In terms of assembly, F-type ATPases have 2 components, CF(1) - the catalytic core - and CF(0) - the membrane proton channel. CF(1) has five subunits: alpha(3), beta(3), gamma(1), delta(1), epsilon(1). CF(0) has three main subunits: a, b and c.

The protein resides in the cell membrane. Produces ATP from ADP in the presence of a proton gradient across the membrane. The gamma chain is believed to be important in regulating ATPase activity and the flow of protons through the CF(0) complex. The protein is ATP synthase gamma chain of Rhodococcus jostii (strain RHA1).